A 208-amino-acid polypeptide reads, in one-letter code: ATP-dependent Clp protease proteolytic subunit (208 aa).

S101 acts as the Nucleophile in catalysis. The active site involves H126.

Belongs to the peptidase S14 family. In terms of assembly, component of the chloroplastic Clp protease core complex.

The protein localises to the plastid. Its subcellular location is the chloroplast stroma. The enzyme catalyses Hydrolysis of proteins to small peptides in the presence of ATP and magnesium. alpha-casein is the usual test substrate. In the absence of ATP, only oligopeptides shorter than five residues are hydrolyzed (such as succinyl-Leu-Tyr-|-NHMec, and Leu-Tyr-Leu-|-Tyr-Trp, in which cleavage of the -Tyr-|-Leu- and -Tyr-|-Trp bonds also occurs).. Functionally, cleaves peptides in various proteins in a process that requires ATP hydrolysis. Has a chymotrypsin-like activity. Plays a major role in the degradation of misfolded proteins. This is ATP-dependent Clp protease proteolytic subunit from Nephroselmis olivacea (Green alga).